A 348-amino-acid chain; its full sequence is Fe(3+) ions import ATP-binding protein FbpC (348 aa).

One can recognise an ABC transporter domain in the interval 7 to 237 (VELRNVTKRF…PASRFMASFM (231 aa)). 39-46 (GPSGCGKT) serves as a coordination point for ATP.

This sequence belongs to the ABC transporter superfamily. Fe(3+) ion importer (TC 3.A.1.10) family. As to quaternary structure, the complex is composed of two ATP-binding proteins (FbpC), two transmembrane proteins (FbpB) and a solute-binding protein (FbpA).

Its subcellular location is the cell inner membrane. The catalysed reaction is Fe(3+)(out) + ATP + H2O = Fe(3+)(in) + ADP + phosphate + H(+). Functionally, part of the ABC transporter complex FbpABC involved in Fe(3+) ions import. Responsible for energy coupling to the transport system. The protein is Fe(3+) ions import ATP-binding protein FbpC of Escherichia coli (strain K12).